The primary structure comprises 630 residues: MLKLTSRVGPKRLSSGLKSSSFKVNATIISKKFQSSLNSKPNEVYTKLSDSEDPKRHQFFQYTWGSWMKNDQSEKSKRETKFSIEGITKLLQDLNVESKNQRNIDKSGEPFVKAPSQLKDGSYVLTQNLTSNLIGKEDSLLVKSIASIHEGKHNRIYKVTLSTGKELVLRIPYKLESEYSISQKIKSEVATMDFLNLKLGANVPKVVAYGANKVNSLQSPFILMEHIEGDLLMKQWDPLVADETEGSQEKLKSVIEPIAAFQEKLLSITFNKFGSLYFNDDVSVTDQSSLPYNGEENPLLTKRWRIGPSVEKSFSKNKNQLSEKEIKQYSRSIDADKPLETITSIAGIELENLRNRLALAQADSGNKVENVELIQKMIATFENLKTMSTKLFNPNSQSLMNAEELFKPRLYCPDLDPLNVILNSNKNNEPYFVDFEYTSIKPFILSSYPSFVGYQGAKIYNLEEDIPGYSEMDEVEKQQYQFMYYKTRNERLWELELNSRKHDLIAVASPHVKVLKSPYVQALDFKNDKDYLYIEGSIVQLQAMWEAYVANELCNATETEFPIAFTAEYLDEHQKDIEDYQMEIVSTPFAATSGWVPQDMFDSLKEQGIIVETENGDFKVETENVLKESE.

The N-terminal 40 residues, 1–40 (MLKLTSRVGPKRLSSGLKSSSFKVNATIISKKFQSSLNSK), are a transit peptide targeting the mitochondrion.

This sequence belongs to the AIM9 family.

It localises to the mitochondrion. The protein is Altered inheritance of mitochondria protein 9, mitochondrial (AIM9) of Debaryomyces hansenii (strain ATCC 36239 / CBS 767 / BCRC 21394 / JCM 1990 / NBRC 0083 / IGC 2968) (Yeast).